Consider the following 488-residue polypeptide: Zinc metalloproteinase-disintegrin 8 (488 aa).

The first 20 residues, 1-20 (MIQVLLVTICLAVFPYQGSS), serve as a signal peptide directing secretion. Residues 21–191 (IILESGNVND…KASQLNLPPE (171 aa)) constitute a propeptide that is removed on maturation. In terms of domain architecture, Peptidase M12B spans 198-396 (TYIELVVVAD…STTRCLHNEP (199 aa)). 2 residues coordinate Ca(2+): Glu201 and Asp285. An N-linked (GlcNAc...) asparagine glycan is attached at Asn296. 3 cysteine pairs are disulfide-bonded: Cys309/Cys391, Cys349/Cys373, and Cys351/Cys356. His334 serves as a coordination point for Zn(2+). Glu335 is a catalytic residue. The Zn(2+) site is built by His338 and His344. Cys391, Asn394, Asn409, Glu413, Glu416, and Asp419 together coordinate Ca(2+). A Disintegrin domain is found at 404–488 (PPFCGNYFKE…ADCPRNGLYG (85 aa)). Disulfide bonds link Cys407–Cys426, Cys418–Cys436, Cys420–Cys431, Cys430–Cys453, Cys444–Cys450, Cys449–Cys474, and Cys462–Cys481. The Cell attachment site motif lies at 466 to 468 (RGD).

Belongs to the venom metalloproteinase (M12B) family. P-II subfamily. The cofactor is Zn(2+). In terms of tissue distribution, expressed by the venom gland.

The protein localises to the secreted. Functionally, inhibits ADP-induced platelet aggregation (probably by binding integrin alpha-IIb/beta-3 (ITGA2B/ITGB3)) and degrades fibrinogen. The polypeptide is Zinc metalloproteinase-disintegrin 8 (Crotalus adamanteus (Eastern diamondback rattlesnake)).